Reading from the N-terminus, the 524-residue chain is Zinc finger protein GLIS2 (524 aa).

An interaction with CTNND1 region spans residues 35–174 (ALHRELGLVD…PKQLVCRWAK (140 aa)). Disordered stretches follow at residues 39 to 62 (ELGLVDDSPTPGSPGSPPSGFLLN) and 84 to 114 (SPPSGLDSPNGSSSLSPERQGNGDLPPVPSA). The tract at residues 71–137 (GRFSAAPLVD…SSFQFFLPLG (67 aa)) is transcription activation. The span at 84 to 100 (SPPSGLDSPNGSSSLSP) shows a compositional bias: low complexity. The tract at residues 148–171 (SFLTPPKDKCLSPDLPLPKQLVCR) is transcription repression. A C2H2-type 1 zinc finger spans residues 168 to 193 (LVCRWAKCNQLFELLQDLVDHVNDYH). The C2H2-type 2; atypical zinc-finger motif lies at 202–229 (YCCHWEGCARHGRGFNARYKMLIHIRTH). 3 consecutive C2H2-type zinc fingers follow at residues 235 to 257 (HRCPTCSKSFSRLENLKIHNRSH), 263 to 287 (YVCPYEGCNKRYSNSSDRFKHTRTH), and 293 to 317 (YYCKMPGCHKRYTDPSSLRKHIKAH). Positions 439–480 (GGKAEGEKGRGSVPTRALGMEGHKTPLERTESSCSRPSPDGL) are disordered. Residues 459–469 (EGHKTPLERTE) are compositionally biased toward basic and acidic residues.

This sequence belongs to the GLI C2H2-type zinc-finger protein family. In terms of assembly, interacts with CTBP1 and HDAC3. Interacts with CTNNB1. Interacts with SUFU. Interacts with CTNND1. C-terminus cleavage is induced by interaction with CTNND1 and enhanced by Src tyrosine kinase. As to expression, expressed at high levels in kidney and at low levels in heart, lung and placenta. Expressed in colon.

The protein resides in the nucleus speckle. It is found in the cytoplasm. Can act either as a transcriptional repressor or as a transcriptional activator, depending on the cell context. Acts as a repressor of the Hedgehog signaling pathway. Represses the Hedgehog-dependent expression of Wnt4. Necessary to maintain the differentiated epithelial phenotype in renal cells through the inhibition of SNAI1, which itself induces the epithelial-to-mesenchymal transition. Represses transcriptional activation mediated by CTNNB1 in the Wnt signaling pathway. May act by recruiting the corepressors CTBP1 and HDAC3. May be involved in neuron differentiation. The protein is Zinc finger protein GLIS2 (GLIS2) of Homo sapiens (Human).